Reading from the N-terminus, the 214-residue chain is Uridine kinase (214 aa).

11-18 (GGSGSGKT) is an ATP binding site.

Belongs to the uridine kinase family.

It is found in the cytoplasm. The catalysed reaction is uridine + ATP = UMP + ADP + H(+). It carries out the reaction cytidine + ATP = CMP + ADP + H(+). The protein operates within pyrimidine metabolism; CTP biosynthesis via salvage pathway; CTP from cytidine: step 1/3. Its pathway is pyrimidine metabolism; UMP biosynthesis via salvage pathway; UMP from uridine: step 1/1. The polypeptide is Uridine kinase (Brevibacillus brevis (strain 47 / JCM 6285 / NBRC 100599)).